Reading from the N-terminus, the 395-residue chain is Protein NDRG1 (395 aa).

The disordered stretch occupies residues 325–395 (RSRTGSAASS…NTPKSMEISC (71 aa)). Residues 326-339 (SRTGSAASSSSQDG) show a composition bias toward low complexity. Repeat copies occupy residues 339-348 (GNRSRSHTNE), 349-358 (GSRSRSHTGD), 359-368 (GNRSRAHTGD), and 369-378 (GNRSRSHTDS). A 4 X 10 AA tandem repeats of G-[NS]-R-S-R-[AS]-H-T-[DGN]-[DES] region spans residues 339-378 (GNRSRSHTNEGSRSRSHTGDGNRSRAHTGDGNRSRSHTDS). Basic and acidic residues predominate over residues 345-376 (HTNEGSRSRSHTGDGNRSRAHTGDGNRSRSHT). Polar residues predominate over residues 377-389 (DSNNTNSEHNTPK).

Belongs to the NDRG family.

Functionally, may be involved in pronephros development, after specification of the pronephros. This chain is Protein NDRG1, found in Xenopus tropicalis (Western clawed frog).